The chain runs to 266 residues: 4-hydroxy-tetrahydrodipicolinate reductase (266 aa).

10–15 serves as a coordination point for NAD(+); the sequence is GPRGRM. Residue lysine 38 participates in NADP(+) binding. Residues 99–101 and 125–128 each bind NAD(+); these read GTT and APNF. Residue histidine 155 is the Proton donor/acceptor of the active site. Residue histidine 156 coordinates (S)-2,3,4,5-tetrahydrodipicolinate. Lysine 159 serves as the catalytic Proton donor. (S)-2,3,4,5-tetrahydrodipicolinate is bound at residue 165 to 166; that stretch reads GT.

The protein belongs to the DapB family.

The protein resides in the cytoplasm. The enzyme catalyses (S)-2,3,4,5-tetrahydrodipicolinate + NAD(+) + H2O = (2S,4S)-4-hydroxy-2,3,4,5-tetrahydrodipicolinate + NADH + H(+). It carries out the reaction (S)-2,3,4,5-tetrahydrodipicolinate + NADP(+) + H2O = (2S,4S)-4-hydroxy-2,3,4,5-tetrahydrodipicolinate + NADPH + H(+). Its pathway is amino-acid biosynthesis; L-lysine biosynthesis via DAP pathway; (S)-tetrahydrodipicolinate from L-aspartate: step 4/4. Functionally, catalyzes the conversion of 4-hydroxy-tetrahydrodipicolinate (HTPA) to tetrahydrodipicolinate. In Bacillus cereus (strain ATCC 14579 / DSM 31 / CCUG 7414 / JCM 2152 / NBRC 15305 / NCIMB 9373 / NCTC 2599 / NRRL B-3711), this protein is 4-hydroxy-tetrahydrodipicolinate reductase.